Reading from the N-terminus, the 405-residue chain is Argininosuccinate synthase (405 aa).

12–20 (AYSGGLDTS) provides a ligand contact to ATP. The L-citrulline site is built by Tyr-90 and Ser-95. Residue Gly-120 participates in ATP binding. The L-aspartate site is built by Thr-122, Asn-126, and Asp-127. Asn-126 provides a ligand contact to L-citrulline. Positions 130, 179, 188, 265, and 277 each coordinate L-citrulline.

The protein belongs to the argininosuccinate synthase family. Type 1 subfamily. As to quaternary structure, homotetramer.

The protein resides in the cytoplasm. The catalysed reaction is L-citrulline + L-aspartate + ATP = 2-(N(omega)-L-arginino)succinate + AMP + diphosphate + H(+). It functions in the pathway amino-acid biosynthesis; L-arginine biosynthesis; L-arginine from L-ornithine and carbamoyl phosphate: step 2/3. This Clostridium perfringens (strain 13 / Type A) protein is Argininosuccinate synthase.